The primary structure comprises 313 residues: Protoheme IX farnesyltransferase (313 aa).

A run of 9 helical transmembrane segments spans residues 33–53, 59–79, 107–127, 129–149, 162–182, 188–208, 212–232, 252–272, and 292–312; these read IALM…PVML, MPSW…AGSA, VEPA…TLMF, LLVN…YVFV, IVIG…AVTG, AVLL…ALAI, DDYA…EVVT, VADI…WFVA, and LFHM…AAAL.

Belongs to the UbiA prenyltransferase family. Protoheme IX farnesyltransferase subfamily.

Its subcellular location is the cell membrane. The catalysed reaction is heme b + (2E,6E)-farnesyl diphosphate + H2O = Fe(II)-heme o + diphosphate. It participates in porphyrin-containing compound metabolism; heme O biosynthesis; heme O from protoheme: step 1/1. Converts heme B (protoheme IX) to heme O by substitution of the vinyl group on carbon 2 of heme B porphyrin ring with a hydroxyethyl farnesyl side group. The protein is Protoheme IX farnesyltransferase of Parafrankia sp. (strain EAN1pec).